Here is a 378-residue protein sequence, read N- to C-terminus: Protein FAM170B (378 aa).

Disordered stretches follow at residues 1–56, 244–265, and 277–378; these read MKHH…LPDD, TRDQ…DSSE, and QQQP…QQGK. Composition is skewed to low complexity over residues 277 to 339 and 349 to 378; these read QQQP…QPLQ and PQKQ…QQGK.

This sequence belongs to the FAM170 family. As to quaternary structure, interacts with GOPC. In terms of tissue distribution, exclusively expressed in adult testis (at protein level). Expression first started at postnatal week 3 in round spermatids, elongated spermatids and mature sperm.

The protein localises to the cytoplasmic vesicle. The protein resides in the secretory vesicle. Its subcellular location is the acrosome. It localises to the acrosome outer membrane. Plays a role in fertilization through the acrosome reaction. This Mus musculus (Mouse) protein is Protein FAM170B.